A 118-amino-acid polypeptide reads, in one-letter code: Large ribosomal subunit protein uL18 (118 aa).

Belongs to the universal ribosomal protein uL18 family. Part of the 50S ribosomal subunit; part of the 5S rRNA/L5/L18/L25 subcomplex. Contacts the 5S and 23S rRNAs.

Its function is as follows. This is one of the proteins that bind and probably mediate the attachment of the 5S RNA into the large ribosomal subunit, where it forms part of the central protuberance. The polypeptide is Large ribosomal subunit protein uL18 (Nitrosospira multiformis (strain ATCC 25196 / NCIMB 11849 / C 71)).